The sequence spans 398 residues: Diaminopropionate ammonia-lyase (398 aa).

K77 is modified (N6-(pyridoxal phosphate)lysine).

It belongs to the diaminopropionate ammonia-lyase family. In terms of assembly, homodimer. Pyridoxal 5'-phosphate is required as a cofactor.

The enzyme catalyses (S)-2,3-diaminopropanoate + H2O + H(+) = pyruvate + 2 NH4(+). It catalyses the reaction (R)-2,3-diaminopropanoate + H2O + H(+) = pyruvate + 2 NH4(+). Catalyzes the alpha,beta-elimination reaction of both L- and D-alpha,beta-diaminopropionate (DAP) to form pyruvate and ammonia. The D-isomer of serine is degraded to pyruvate, though very poorly; other amino acids (L-serine, D- and L-threonine, D- and L-beta-Cl-alanine) are not substrates. The polypeptide is Diaminopropionate ammonia-lyase (ygeX) (Escherichia coli O157:H7).